The following is a 665-amino-acid chain: Probable potassium transport system protein Kup 2 (665 aa).

The next 13 membrane-spanning stretches (helical) occupy residues 13–33 (GLLVSIGIVYGDIGTSPLYVM), 55–75 (ISLILWTITLLTTVKYVLIAL), 98–118 (WLVLPALIGGAALLADGTLTP), 138–158 (IPVPNQNSVLIITIIILLFLF), 167–187 (IIGKTFGPIMLIWFTFLGLTG), 195–215 (LSLLEALNPVLAVKILFSPAN), 217–237 (VGVLILGAVFLATTGAEALYS), 250–270 (SWPYVFICLALNYLGQGVWIL), 295–315 (FFAIILATLAAIIASQALITG), 344–364 (IFIPSINKMLCAATIGIVFLF), 375–395 (GLAITVTMLMTTILLFEYLSL), 400–420 (ILLRLVFLFLFGAIESMFLIS), and 428–448 (GGYVTVIIAAFIGAIMYIWYF).

This sequence belongs to the HAK/KUP transporter (TC 2.A.72) family.

It is found in the cell membrane. It catalyses the reaction K(+)(in) + H(+)(in) = K(+)(out) + H(+)(out). Transport of potassium into the cell. Likely operates as a K(+):H(+) symporter. This chain is Probable potassium transport system protein Kup 2, found in Lactobacillus johnsonii (strain CNCM I-12250 / La1 / NCC 533).